The sequence spans 443 residues: MEIASNKGVIADASTPAGRAGMSESEWREAIKFDSTDTGWVIMSIGMAIGAGIVFLPVQVGLMGLWVFLLSSVIGYPAMYLFQRLFINTLAESPECKDYPSVISGYLGKNWGILLGALYFVMLVIWMFVYSTAITNDSASYLHTFGVTEGLLSDSPFYGLVLICILVAISSRGEKLLFKISTGMVLTKLLVVAALGVSMVGMWHLYNVGSLPPLGLLVKNAIITLPFTLTSILFIQTLSPMVISYRSREKSIEVARHKALRAMNIAFGILFVTVFFYAVSFTLAMGHDEAVKAYEQNISALAIAAQFISGDGAAWVKVVSVILNIFAVMTAFFGVYLGFREATQGIVMNILRRKMPAEKINENLVQRGIMIFAILLAWSAIVLNAPVLSFTSICSPIFGMVGCLIPAWLVYKVPALHKYKGMSLYLIIVTGLLLCVSPFLAFS.

Over 1–48 the chain is Cytoplasmic; that stretch reads MEIASNKGVIADASTPAGRAGMSESEWREAIKFDSTDTGWVIMSIGMA. Residues 49–69 form a helical membrane-spanning segment; the sequence is IGAGIVFLPVQVGLMGLWVFL. The Periplasmic portion of the chain corresponds to 70 to 110; the sequence is LSSVIGYPAMYLFQRLFINTLAESPECKDYPSVISGYLGKN. A helical membrane pass occupies residues 111–131; the sequence is WGILLGALYFVMLVIWMFVYS. Over 132 to 149 the chain is Cytoplasmic; the sequence is TAITNDSASYLHTFGVTE. Residues 150 to 170 form a helical membrane-spanning segment; it reads GLLSDSPFYGLVLICILVAIS. Topologically, residues 171-182 are periplasmic; the sequence is SRGEKLLFKIST. A helical transmembrane segment spans residues 183 to 203; it reads GMVLTKLLVVAALGVSMVGMW. Over 204 to 214 the chain is Cytoplasmic; sequence HLYNVGSLPPL. Residues 215–235 traverse the membrane as a helical segment; sequence GLLVKNAIITLPFTLTSILFI. The Periplasmic segment spans residues 236-264; sequence QTLSPMVISYRSREKSIEVARHKALRAMN. Residues 265 to 285 traverse the membrane as a helical segment; the sequence is IAFGILFVTVFFYAVSFTLAM. Residues 286-297 lie on the Cytoplasmic side of the membrane; the sequence is GHDEAVKAYEQN. 2 helical membrane-spanning segments follow: residues 298–318 and 319–339; these read ISALAIAAQFISGDGAAWVKV and VSVILNIFAVMTAFFGVYLGF. Residues 340–367 are Cytoplasmic-facing; sequence REATQGIVMNILRRKMPAEKINENLVQR. A helical membrane pass occupies residues 368 to 388; sequence GIMIFAILLAWSAIVLNAPVL. A topological domain (periplasmic) is located at residue serine 389. A helical membrane pass occupies residues 390 to 410; sequence FTSICSPIFGMVGCLIPAWLV. The Cytoplasmic portion of the chain corresponds to 411–421; sequence YKVPALHKYKG. Residues 422–442 form a helical membrane-spanning segment; the sequence is MSLYLIIVTGLLLCVSPFLAF. A topological domain (periplasmic) is located at residue serine 443.

It belongs to the amino acid/polyamine transporter 2 family. SdaC/TdcC subfamily.

Its subcellular location is the cell inner membrane. Functionally, plays a role in L-cysteine detoxification. May transport both D- and L-serine. This is Probable serine transporter (dlsT) from Escherichia coli (strain K12).